A 212-amino-acid polypeptide reads, in one-letter code: Thiamine-phosphate synthase (212 aa).

Residues 41–45 (QYREK) and D76 each bind 4-amino-2-methyl-5-(diphosphooxymethyl)pyrimidine. Mg(2+) contacts are provided by D77 and D96. Residue S114 participates in 4-amino-2-methyl-5-(diphosphooxymethyl)pyrimidine binding. 141-143 (TTS) serves as a coordination point for 2-[(2R,5Z)-2-carboxy-4-methylthiazol-5(2H)-ylidene]ethyl phosphate. K144 is a binding site for 4-amino-2-methyl-5-(diphosphooxymethyl)pyrimidine. Residues G172 and 192 to 193 (IS) contribute to the 2-[(2R,5Z)-2-carboxy-4-methylthiazol-5(2H)-ylidene]ethyl phosphate site.

The protein belongs to the thiamine-phosphate synthase family. It depends on Mg(2+) as a cofactor.

It catalyses the reaction 2-[(2R,5Z)-2-carboxy-4-methylthiazol-5(2H)-ylidene]ethyl phosphate + 4-amino-2-methyl-5-(diphosphooxymethyl)pyrimidine + 2 H(+) = thiamine phosphate + CO2 + diphosphate. It carries out the reaction 2-(2-carboxy-4-methylthiazol-5-yl)ethyl phosphate + 4-amino-2-methyl-5-(diphosphooxymethyl)pyrimidine + 2 H(+) = thiamine phosphate + CO2 + diphosphate. The catalysed reaction is 4-methyl-5-(2-phosphooxyethyl)-thiazole + 4-amino-2-methyl-5-(diphosphooxymethyl)pyrimidine + H(+) = thiamine phosphate + diphosphate. It participates in cofactor biosynthesis; thiamine diphosphate biosynthesis; thiamine phosphate from 4-amino-2-methyl-5-diphosphomethylpyrimidine and 4-methyl-5-(2-phosphoethyl)-thiazole: step 1/1. Condenses 4-methyl-5-(beta-hydroxyethyl)thiazole monophosphate (THZ-P) and 2-methyl-4-amino-5-hydroxymethyl pyrimidine pyrophosphate (HMP-PP) to form thiamine monophosphate (TMP). The protein is Thiamine-phosphate synthase of Leuconostoc citreum (strain KM20).